The following is a 203-amino-acid chain: Large ribosomal subunit protein bL25 (203 aa).

The protein belongs to the bacterial ribosomal protein bL25 family. CTC subfamily. As to quaternary structure, part of the 50S ribosomal subunit; part of the 5S rRNA/L5/L18/L25 subcomplex. Contacts the 5S rRNA. Binds to the 5S rRNA independently of L5 and L18.

This is one of the proteins that binds to the 5S RNA in the ribosome where it forms part of the central protuberance. The chain is Large ribosomal subunit protein bL25 from Cereibacter sphaeroides (strain ATCC 17029 / ATH 2.4.9) (Rhodobacter sphaeroides).